Here is a 630-residue protein sequence, read N- to C-terminus: Ankyrin repeat protein OPG025 (630 aa).

6 ANK repeats span residues 36–69 (DGET…YKNI), 70–100 (NDFD…EINS), 103–134 (NGIN…PTCS), 174–210 (MGKT…EMCH), 338–367 (KHIN…VVVN), and 408–437 (HGRS…DINI).

The protein belongs to the orthopoxvirus OPG025 family. In terms of assembly, interacts with components of host SCF complex CUL1 and SKP1 and components of the cullin deneddylation/COP9 signalosome complex subunits COPS7A and COPS7B.

Its function is as follows. Plays a role in the inhibition of host immune repsonse by counteracting the action of interferons on early events in the viral replication cycle. This chain is Ankyrin repeat protein OPG025 (OPG025), found in Monkeypox virus.